A 182-amino-acid polypeptide reads, in one-letter code: Acireductone dioxygenase (182 aa).

Residues His100, His102, Glu106, and His145 each coordinate Fe(2+). 4 residues coordinate Ni(2+): His100, His102, Glu106, and His145.

It belongs to the acireductone dioxygenase (ARD) family. As to quaternary structure, monomer. It depends on Fe(2+) as a cofactor. Ni(2+) serves as cofactor.

The catalysed reaction is 1,2-dihydroxy-5-(methylsulfanyl)pent-1-en-3-one + O2 = 3-(methylsulfanyl)propanoate + CO + formate + 2 H(+). It carries out the reaction 1,2-dihydroxy-5-(methylsulfanyl)pent-1-en-3-one + O2 = 4-methylsulfanyl-2-oxobutanoate + formate + 2 H(+). It functions in the pathway amino-acid biosynthesis; L-methionine biosynthesis via salvage pathway; L-methionine from S-methyl-5-thio-alpha-D-ribose 1-phosphate: step 5/6. In terms of biological role, catalyzes 2 different reactions between oxygen and the acireductone 1,2-dihydroxy-3-keto-5-methylthiopentene (DHK-MTPene) depending upon the metal bound in the active site. Fe-containing acireductone dioxygenase (Fe-ARD) produces formate and 2-keto-4-methylthiobutyrate (KMTB), the alpha-ketoacid precursor of methionine in the methionine recycle pathway. Ni-containing acireductone dioxygenase (Ni-ARD) produces methylthiopropionate, carbon monoxide and formate, and does not lie on the methionine recycle pathway. The chain is Acireductone dioxygenase from Trichormus variabilis (strain ATCC 29413 / PCC 7937) (Anabaena variabilis).